Here is a 118-residue protein sequence, read N- to C-terminus: Large ribosomal subunit protein bL17 (118 aa).

It belongs to the bacterial ribosomal protein bL17 family. Part of the 50S ribosomal subunit. Contacts protein L32.

This chain is Large ribosomal subunit protein bL17, found in Campylobacter fetus subsp. fetus (strain 82-40).